The following is a 386-amino-acid chain: Phosphomevalonate dehydratase large subunit (386 aa).

(R)-5-phosphomevalonate-binding residues include Gly48, Val49, Ser50, Asn53, Arg63, Asn79, and Pro80. Cys110 serves as a coordination point for [4Fe-4S] cluster. Residues Glu129 and Ser130 each contribute to the (R)-5-phosphomevalonate site. The [4Fe-4S] cluster site is built by Cys283 and Cys342. Lys361 lines the (R)-5-phosphomevalonate pocket.

This sequence belongs to the AcnX type II large subunit family. As to quaternary structure, heterodimer composed of a large subunit (PMDh-L) and a small subunit (PMDh-S). The cofactor is [4Fe-4S] cluster.

The enzyme catalyses (R)-5-phosphomevalonate = (2E)-3-methyl-5-phosphooxypent-2-enoate + H2O. It functions in the pathway isoprenoid biosynthesis; isopentenyl diphosphate biosynthesis via mevalonate pathway. Component of a hydro-lyase that catalyzes the dehydration of mevalonate 5-phosphate (MVA5P) to form trans-anhydromevalonate 5-phosphate (tAHMP). Involved in the archaeal mevalonate (MVA) pathway, which provides fundamental precursors for isoprenoid biosynthesis, such as isopentenyl diphosphate (IPP) and dimethylallyl diphosphate (DMAPP). This is Phosphomevalonate dehydratase large subunit from Thermococcus kodakarensis (strain ATCC BAA-918 / JCM 12380 / KOD1) (Pyrococcus kodakaraensis (strain KOD1)).